The following is a 500-amino-acid chain: Vitamin D(3) 25-hydroxylase (500 aa).

Residue Cys446 coordinates heme.

Belongs to the cytochrome P450 family. Heme is required as a cofactor. As to expression, found in liver and kidney.

It localises to the endoplasmic reticulum membrane. The protein localises to the microsome membrane. The catalysed reaction is calciol + reduced [NADPH--hemoprotein reductase] + O2 = calcidiol + oxidized [NADPH--hemoprotein reductase] + H2O + H(+). The enzyme catalyses alfacalcidol + reduced [NADPH--hemoprotein reductase] + O2 = calcitriol + oxidized [NADPH--hemoprotein reductase] + H2O + H(+). It catalyses the reaction dodecanoate + reduced [NADPH--hemoprotein reductase] + O2 = 12-hydroxydodecanoate + oxidized [NADPH--hemoprotein reductase] + H2O + H(+). It carries out the reaction dodecanoate + reduced [NADPH--hemoprotein reductase] + O2 = 11-hydroxydodecanoate + oxidized [NADPH--hemoprotein reductase] + H2O + H(+). The catalysed reaction is 5beta-cholestane-3alpha,7alpha-diol + reduced [NADPH--hemoprotein reductase] + O2 = 5beta-cholestane-3alpha,7alpha,25-triol + oxidized [NADPH--hemoprotein reductase] + H2O + H(+). The enzyme catalyses 5beta-cholestane-3alpha,7alpha,12alpha-triol + reduced [NADPH--hemoprotein reductase] + O2 = 5beta-cholestane-3alpha,7alpha,12alpha,25-tetrol + oxidized [NADPH--hemoprotein reductase] + H2O + H(+). Functionally, catalyzes the 25-hydroxylation of vitamin D(3) (calciol), 1alpha-hydroxyvitamin D(3) (alphacalcidiol) and some C27 steroids. In addition the enzyme catalyzes the hydroxylation of positions 11 and 12 of dodecanoate. The chain is Vitamin D(3) 25-hydroxylase (CYP2D25) from Sus scrofa (Pig).